Reading from the N-terminus, the 418-residue chain is CinA-like protein (418 aa).

Belongs to the CinA family.

The polypeptide is CinA-like protein (Cyanothece sp. (strain PCC 7425 / ATCC 29141)).